Here is a 435-residue protein sequence, read N- to C-terminus: N-lysine methyltransferase SMYD2-A (435 aa).

Residues 7 to 241 (EGTERFLSPG…PEEEIFNSYI (235 aa)) form the SET domain. Residue 17 to 19 (KGR) participates in S-adenosyl-L-methionine binding. The Zn(2+) site is built by C52, C55, C65, C68, C74, C78, H86, and C90. The MYND-type zinc-finger motif lies at 52 to 90 (CECCFTRKEGLSKCGKCKQAYYCNVECQRGDWPMHKLEC). S-adenosyl-L-methionine is bound by residues H137, 206–207 (NH), and 258–260 (YFF).

This sequence belongs to the class V-like SAM-binding methyltransferase superfamily.

It localises to the cytoplasm. It is found in the cytosol. Its subcellular location is the nucleus. It catalyses the reaction L-lysyl(4)-[histone H3] + 3 S-adenosyl-L-methionine = N(6),N(6),N(6)-trimethyl-L-lysyl(4)-[histone H3] + 3 S-adenosyl-L-homocysteine + 3 H(+). The catalysed reaction is L-lysyl-[protein] + S-adenosyl-L-methionine = N(6)-methyl-L-lysyl-[protein] + S-adenosyl-L-homocysteine + H(+). Its function is as follows. Protein-lysine N-methyltransferase that methylates both histones and non-histone proteins, including p53/TP53 and RB1. Specifically trimethylates histone H3 'Lys-4' (H3K4me3) in vivo. The activity requires interaction with HSP90alpha. Shows even higher methyltransferase activity on p53/TP53. Monomethylates 'Lys-370' of p53/TP53, leading to decreased DNA-binding activity and subsequent transcriptional regulation activity of p53/TP53. Monomethylates RB1 at 'Lys-860'. The protein is N-lysine methyltransferase SMYD2-A (smyd2a) of Danio rerio (Zebrafish).